Here is an 86-residue protein sequence, read N- to C-terminus: MAHKKAAGSTRNGRDSESKRLGVKRYGGESVSAGSIIVRQRGTRFHAGSNVGIGKDHTLFAKAEGQVKFETKGPQNRKFVSIVPAA.

Positions 1–26 (MAHKKAAGSTRNGRDSESKRLGVKRY) are disordered.

Belongs to the bacterial ribosomal protein bL27 family.

The protein is Large ribosomal subunit protein bL27 of Marinobacter nauticus (strain ATCC 700491 / DSM 11845 / VT8) (Marinobacter aquaeolei).